Here is a 333-residue protein sequence, read N- to C-terminus: S-adenosylmethionine-dependent nucleotide dehydratase (333 aa).

The Radical SAM core domain occupies 1–239; sequence MNIKTIVINW…SAPQKQNNVI (239 aa). The [4Fe-4S] cluster site is built by Cys-16, Cys-20, and Cys-23.

Belongs to the radical SAM superfamily. Viperin family. It depends on [4Fe-4S] cluster as a cofactor.

It catalyses the reaction GTP + AH2 + S-adenosyl-L-methionine = 3'-deoxy-3',4'-didehydro-GTP + 5'-deoxyadenosine + L-methionine + A + H2O + H(+). Functionally, expression of pVip56 in E.coli (strain MG1655) confers resistance to phage P1; has no effect against T7. Catalyzes the conversion of guanosine triphosphate (GTP) to 3'-deoxy-3',4'-didehydro-GTP (ddhGTP), probably via a SAM-dependent radical mechanism. The modified nucleotide represses transcription from T7 RNA polymerase-directed genes (possibly by acting as chain terminators), strongly suggesting these nucleotides block viral polymerase transcription. How this protein allows bacteria to resist viruses that do not encode their own RNA polymerase (such as lambda, P1) is unknown. This Fibrobacter sp. (strain UWH6) protein is S-adenosylmethionine-dependent nucleotide dehydratase.